A 305-amino-acid chain; its full sequence is tRNA pseudouridine synthase B (305 aa).

The Nucleophile role is filled by aspartate 41.

This sequence belongs to the pseudouridine synthase TruB family. Type 1 subfamily.

It catalyses the reaction uridine(55) in tRNA = pseudouridine(55) in tRNA. Functionally, responsible for synthesis of pseudouridine from uracil-55 in the psi GC loop of transfer RNAs. This is tRNA pseudouridine synthase B from Prochlorococcus marinus (strain MIT 9515).